The sequence spans 490 residues: Aspartyl/glutamyl-tRNA(Asn/Gln) amidotransferase subunit B (490 aa).

Belongs to the GatB/GatE family. GatB subfamily. In terms of assembly, heterotrimer of A, B and C subunits.

The catalysed reaction is L-glutamyl-tRNA(Gln) + L-glutamine + ATP + H2O = L-glutaminyl-tRNA(Gln) + L-glutamate + ADP + phosphate + H(+). It catalyses the reaction L-aspartyl-tRNA(Asn) + L-glutamine + ATP + H2O = L-asparaginyl-tRNA(Asn) + L-glutamate + ADP + phosphate + 2 H(+). Its function is as follows. Allows the formation of correctly charged Asn-tRNA(Asn) or Gln-tRNA(Gln) through the transamidation of misacylated Asp-tRNA(Asn) or Glu-tRNA(Gln) in organisms which lack either or both of asparaginyl-tRNA or glutaminyl-tRNA synthetases. The reaction takes place in the presence of glutamine and ATP through an activated phospho-Asp-tRNA(Asn) or phospho-Glu-tRNA(Gln). The chain is Aspartyl/glutamyl-tRNA(Asn/Gln) amidotransferase subunit B from Prochlorococcus marinus subsp. pastoris (strain CCMP1986 / NIES-2087 / MED4).